The following is a 139-amino-acid chain: Holo-[acyl-carrier-protein] synthase (139 aa).

Mg(2+) is bound by residues D8 and E57.

It belongs to the P-Pant transferase superfamily. AcpS family. Mg(2+) is required as a cofactor.

It is found in the cytoplasm. It carries out the reaction apo-[ACP] + CoA = holo-[ACP] + adenosine 3',5'-bisphosphate + H(+). Functionally, transfers the 4'-phosphopantetheine moiety from coenzyme A to a Ser of acyl-carrier-protein. This chain is Holo-[acyl-carrier-protein] synthase, found in Sinorhizobium fredii (strain NBRC 101917 / NGR234).